A 464-amino-acid polypeptide reads, in one-letter code: Synaptosomal-associated protein 47 (464 aa).

A disordered region spans residues 20–42; sequence GRLWDSSGVPQRQKRPGPWRTQT. T-SNARE coiled-coil homology domains follow at residues 154–216 and 401–463; these read VADA…LTEL and TSLP…MKRL.

Belongs to the SVAP1 family. As to quaternary structure, forms a complex containing SNAP47, VAMP2 and STX1A. Associates with the BLOC-1 complex. Interacts with BLOC1S6.

It localises to the endomembrane system. The protein localises to the cytoplasm. Its subcellular location is the perinuclear region. Plays a role in intracellular membrane fusion. In Homo sapiens (Human), this protein is Synaptosomal-associated protein 47 (SNAP47).